A 531-amino-acid chain; its full sequence is Polypyrimidine tract-binding protein 2 (531 aa).

An N-acetylmethionine modification is found at methionine 1. Phosphoserine is present on residues serine 26 and serine 27. RRM domains lie at 59–133 (RVLH…YSNH) and 181–257 (LRII…FSKL). Serine 308 carries the phosphoserine modification. RRM domains follow at residues 338 to 412 (TVLL…LSKH) and 455 to 529 (ATLH…FSKS).

Monomer. Interacts with NOVA1; the interaction is direct. Identified in a mRNP complex, at least composed of DHX9, DDX3X, ELAVL1, HNRNPU, IGF2BP1, ILF3, PABPC1, PCBP2, PTBP2, STAU1, STAU2, SYNCRIP and YBX1. Part of a ternary complex containing KHSRP and HNRPH1. Interacts with NOVA2; the interaction is direct.

Its subcellular location is the nucleus. In terms of biological role, RNA-binding protein which binds to intronic polypyrimidine tracts and mediates negative regulation of exons splicing. May antagonize in a tissue-specific manner the ability of NOVA1 to activate exon selection. In addition to its function in pre-mRNA splicing, plays also a role in the regulation of translation. In Rattus norvegicus (Rat), this protein is Polypyrimidine tract-binding protein 2.